We begin with the raw amino-acid sequence, 776 residues long: Lysyl oxidase homolog 2 (776 aa).

The first 25 residues, 1-25, serve as a signal peptide directing secretion; sequence MELHFGSCLSGCLALLVLLPSLSLA. SRCR domains follow at residues 61–162, 191–305, 329–428, and 438–546; these read VRLA…VVCS, IRPI…VSCV, VRLR…VRCN, and VRLN…VACS. 9 disulfide bridges follow: Cys-87/Cys-151, Cys-100/Cys-161, Cys-131/Cys-141, Cys-221/Cys-294, Cys-234/Cys-304, Cys-268/Cys-278, Cys-354/Cys-417, Cys-367/Cys-427, and Cys-398/Cys-408. Asn-267 carries an N-linked (GlcNAc...) asparagine glycan. A glycan (N-linked (GlcNAc...) asparagine) is linked at Asn-291. N-linked (GlcNAc...) asparagine glycosylation occurs at Asn-458. Disulfide bonds link Cys-467–Cys-532, Cys-480–Cys-545, and Cys-514–Cys-524. Residues 550–753 form a lysyl-oxidase like region; that stretch reads PDLVLNAEIV…WMYNCHVGGA (204 aa). Ca(2+) is bound by residues Asp-551 and Leu-552. Cystine bridges form between Cys-575/Cys-627, Cys-581/Cys-697, Cys-659/Cys-675, and Cys-665/Cys-687. Residues His-628, His-630, and His-632 each coordinate Cu cation. An N-linked (GlcNAc...) asparagine glycan is attached at Asn-646. Positions 655–691 form a cross-link, lysine tyrosylquinone (Lys-Tyr); the sequence is KASFCLEDTECEGDIQKSYECANFGEQGITMGCWDMY. Position 691 is a 2',4',5'-topaquinone (Tyr-691). 4 residues coordinate Ca(2+): Glu-724, Asp-726, Asn-729, and Asn-730. Residues Cys-734 and Cys-748 are joined by a disulfide bond.

Belongs to the lysyl oxidase family. In terms of assembly, component of some chromatin repressor complex. Interacts with SNAI1. Interacts with TAF10. Interacts with HSPA5. Interacts with EFEMP2. Requires Cu cation as cofactor. The cofactor is lysine tyrosylquinone residue. Post-translationally, the lysine tyrosylquinone cross-link (LTQ) is generated by condensation of the epsilon-amino group of a lysine with a topaquinone produced by oxidation of tyrosine. N-glycosylated. N-glycosylation on Asn-458 and Asn-646 may be essential for proper folding and secretion; may be composed of a fucosylated carbohydrates attached to a trimannose N-linked glycan core. As to expression, ubiquitous. Highest expression in skin, lung and thymus. Present in chondrocytes: mainly expressed by chondrocytes in healing fractures and in epiphyseal growth plates (at protein level).

The protein localises to the secreted. It localises to the extracellular space. Its subcellular location is the extracellular matrix. It is found in the basement membrane. The protein resides in the nucleus. The protein localises to the chromosome. It localises to the endoplasmic reticulum. It catalyses the reaction L-lysyl-[protein] + O2 + H2O = (S)-2-amino-6-oxohexanoyl-[protein] + H2O2 + NH4(+). Its activity is regulated as follows. Specifically inhibited by a mouse monoclonal antibody AB0023, inhibition occurs in a non-competitive manner. In terms of biological role, mediates the post-translational oxidative deamination of lysine residues on target proteins leading to the formation of deaminated lysine (allysine). Acts as a transcription corepressor and specifically mediates deamination of trimethylated 'Lys-4' of histone H3 (H3K4me3), a specific tag for epigenetic transcriptional activation. Shows no activity against histone H3 when it is trimethylated on 'Lys-9' (H3K9me3) or 'Lys-27' (H3K27me3) or when 'Lys-4' is monomethylated (H3K4me1) or dimethylated (H3K4me2). Also mediates deamination of methylated TAF10, a member of the transcription factor IID (TFIID) complex, which induces release of TAF10 from promoters, leading to inhibition of TFIID-dependent transcription. LOXL2-mediated deamination of TAF10 results in transcriptional repression of genes required for embryonic stem cell pluripotency including POU5F1/OCT4, NANOG, KLF4 and SOX2. Involved in epithelial to mesenchymal transition (EMT) via interaction with SNAI1 and participates in repression of E-cadherin, probably by mediating deamination of histone H3. During EMT, involved with SNAI1 in negatively regulating pericentromeric heterochromatin transcription. SNAI1 recruits LOXL2 to pericentromeric regions to oxidize histone H3 and repress transcription which leads to release of heterochromatin component CBX5/HP1A, enabling chromatin reorganization and acquisition of mesenchymal traits. Interacts with the endoplasmic reticulum protein HSPA5 which activates the IRE1-XBP1 pathway of the unfolded protein response, leading to expression of several transcription factors involved in EMT and subsequent EMT induction. When secreted into the extracellular matrix, promotes cross-linking of extracellular matrix proteins by mediating oxidative deamination of peptidyl lysine residues in precursors to fibrous collagen and elastin. Acts as a regulator of sprouting angiogenesis, probably via collagen IV scaffolding. Acts as a regulator of chondrocyte differentiation, probably by regulating expression of factors that control chondrocyte differentiation. This chain is Lysyl oxidase homolog 2 (Loxl2), found in Mus musculus (Mouse).